The following is a 99-amino-acid chain: Elongin-C (99 aa).

Ser-2 is modified (N-acetylserine). At Ser-2 the chain carries Phosphoserine.

The protein belongs to the SKP1 family. In terms of assembly, heterodimer with ELA1. Component of a CRL3 E3 ubiquitin ligase complex consisting of the cullin CUL3, the linker protein ELC1, the substrate receptor ELA1, and the RING protein HRT1. Interacts with CIN5. Interacts with PCL6. Interacts with SNF4. Interacts with the large RNA polymerase II subunit RPO21 in a manner dependent on DEF1. Interacts with DEF1. Interacts with RAD7. Interacts with RAD16.

The protein resides in the cytoplasm. It localises to the nucleus. Its function is as follows. As part of the CRL3 E3 ubiquitin ligase complex; polyubiquitylates monoubiquitylated RNA polymerase II subunit RPO21 to trigger its proteolysis; plays a role in global genomic repair. Prevents degradation of interacting proteins like PCL6 by the proteasome. This chain is Elongin-C (ELC1), found in Saccharomyces cerevisiae (strain ATCC 204508 / S288c) (Baker's yeast).